The primary structure comprises 219 residues: Lipid transferase CIDEB (219 aa).

Positions 33–110 (PRQRPFRVCD…VLELGQSWSP (78 aa)) constitute a CIDE-N domain.

Belongs to the CIDE family. As to quaternary structure, interacts with DFFA. Interacts with DFFB; inhibited by DFFB. Interacts with APOB. Interacts with PREB/SEC12; facilitating loading of SCAP-SREBP into COPII vesicles.

It is found in the lipid droplet. The protein localises to the endoplasmic reticulum membrane. Its subcellular location is the golgi apparatus. The protein resides in the cytoplasmic vesicle. It localises to the COPI-coated vesicle. In terms of biological role, lipid transferase specifically expressed in hepatocytes, which promotes unilocular lipid droplet formation by mediating lipid droplet fusion. Lipid droplet fusion promotes their enlargement, restricting lipolysis and favoring lipid storage. Localizes on the lipid droplet surface, at focal contact sites between lipid droplets, and mediates atypical lipid droplet fusion by promoting directional net neutral lipid transfer from the smaller to larger lipid droplets. The transfer direction may be driven by the internal pressure difference between the contacting lipid droplet pair. Promotes lipid exchange and lipid droplet fusion in both small and large lipid droplet-containing hepatocytes. In addition to its role in lipid droplet fusion, also involved in cytoplasmic vesicle biogenesis and transport. Required for very-low-density lipoprotein (VLDL) lipidation and maturation. Probably involved in the biogenesis of VLDL transport vesicles by forming a COPII vesicle coat and facilitating the formation of endoplasmic reticulum-derived large vesicles. Also involved in sterol-regulated export of the SCAP-SREBP complex, composed of SCAP, SREBF1/SREBP1 and SREBF2/SREBP2, by promoting loading of SCAP-SREBP into COPII vesicles. May also activate apoptosis. This chain is Lipid transferase CIDEB (CIDEB), found in Bos taurus (Bovine).